Here is a 244-residue protein sequence, read N- to C-terminus: ATP synthase subunit a (244 aa).

6 helical membrane-spanning segments follow: residues 17–37 (LTNILMITVASVIVLLIAILT), 75–95 (FLALGVTLLMYIFVSNMLGLP), 112–132 (DPAITLTLAVMVVSLTHYYGV), 164–184 (LTLGLRLYGNIFAGEILLGLL), 196–216 (FFLGLVGTVGAIIPMLAWQAF), and 217–237 (SLFIGTIQAFIFTMLTMVYMS).

This sequence belongs to the ATPase A chain family. As to quaternary structure, F-type ATPases have 2 components, CF(1) - the catalytic core - and CF(0) - the membrane proton channel. CF(1) has five subunits: alpha(3), beta(3), gamma(1), delta(1), epsilon(1). CF(0) has three main subunits: a(1), b(2) and c(9-12). The alpha and beta chains form an alternating ring which encloses part of the gamma chain. CF(1) is attached to CF(0) by a central stalk formed by the gamma and epsilon chains, while a peripheral stalk is formed by the delta and b chains.

The protein resides in the cell membrane. In terms of biological role, key component of the proton channel; it plays a direct role in the translocation of protons across the membrane. The sequence is that of ATP synthase subunit a from Bacillus velezensis (strain DSM 23117 / BGSC 10A6 / LMG 26770 / FZB42) (Bacillus amyloliquefaciens subsp. plantarum).